The sequence spans 201 residues: Dephospho-CoA kinase (201 aa).

The DPCK domain occupies 6-201 (VMGLTGSIGM…RAIREKNPRG (196 aa)). 14-19 (GMGKSA) lines the ATP pocket.

Belongs to the CoaE family.

It localises to the cytoplasm. The catalysed reaction is 3'-dephospho-CoA + ATP = ADP + CoA + H(+). It functions in the pathway cofactor biosynthesis; coenzyme A biosynthesis; CoA from (R)-pantothenate: step 5/5. In terms of biological role, catalyzes the phosphorylation of the 3'-hydroxyl group of dephosphocoenzyme A to form coenzyme A. The sequence is that of Dephospho-CoA kinase from Novosphingobium aromaticivorans (strain ATCC 700278 / DSM 12444 / CCUG 56034 / CIP 105152 / NBRC 16084 / F199).